The primary structure comprises 98 residues: MFFSRISTIVSMTALFASALAMPTTLTSRQDAICSSGNPQCCDVDVLGVADLDCEAPPAAYTDIKSFSDVCADVGKINMCCDLPVLGQGLICSSPDNS.

An N-terminal signal peptide occupies residues 1 to 21; that stretch reads MFFSRISTIVSMTALFASALA. Cystine bridges form between cysteine 34–cysteine 80, cysteine 41–cysteine 71, cysteine 42–cysteine 54, and cysteine 81–cysteine 92.

The protein belongs to the cerato-ulmin hydrophobin family.

The protein resides in the secreted. Its subcellular location is the cell wall. Aerial growth, conidiation, and dispersal of filamentous fungi in the environment rely upon a capability of their secreting small amphipathic proteins called hydrophobins (HPBs) with low sequence identity. Class I can self-assemble into an outermost layer of rodlet bundles on aerial cell surfaces, conferring cellular hydrophobicity that supports fungal growth, development and dispersal; whereas Class II form highly ordered films at water-air interfaces through intermolecular interactions but contribute nothing to the rodlet structure. In Botryotinia fuckeliana, hydrophobins are not involved in conferring surface hydrophobicity to conidia and aerial hyphae and their function in sclerotia and fruiting bodies remains to be investigated. The sequence is that of Class II hydrophobin 2 from Botryotinia fuckeliana (strain B05.10) (Noble rot fungus).